Reading from the N-terminus, the 166-residue chain is Cofilin-1 (166 aa).

Position 2 is an N-acetylalanine (Ala-2). A phosphoserine mark is found at Ser-3 and Ser-8. One can recognise an ADF-H domain in the interval 4–153 (GVAVSDGVIK…KDRCTLAEKL (150 aa)). Lys-13 is modified (N6-acetyllysine). Phosphothreonine is present on Thr-25. Positions 30–34 (KKRKK) match the Nuclear localization signal motif. Ser-41 is modified (phosphoserine). Thr-63 is subject to Phosphothreonine. Tyr-68 is subject to Phosphotyrosine. At Lys-73 the chain carries N6-acetyllysine. Tyr-82 bears the Phosphotyrosine mark. Lys-132 participates in a covalent cross-link: Glycyl lysine isopeptide (Lys-Gly) (interchain with G-Cter in SUMO2). Tyr-140 carries the post-translational modification Phosphotyrosine. N6-acetyllysine is present on Lys-144. Position 156 is a phosphoserine (Ser-156).

This sequence belongs to the actin-binding proteins ADF family. Can bind G- and F-actin in a 1:1 ratio of cofilin to actin. It is a major component of intranuclear and cytoplasmic actin rods. Interacts with the subcortical maternal complex (SCMC) via interaction with TLE6 and NLRP5. Interacts with C9orf72. Inactivated by phosphorylation on Ser-3. Phosphorylated on Ser-3 in resting cells. Dephosphorylated by PDXP/chronophin; this restores its activity in promoting actin filament depolymerization. The phosphorylation of Ser-24 may prevent recognition of the nuclear localization signal. Phosphorylated via a ARRB1-RAC1-LIMK1-PAK1 cascade upon active ligand stimulation of atypical chemokine receptor ACKR2. Widely distributed in various tissues. Not found in skeletal muscle.

It localises to the nucleus matrix. The protein resides in the cytoplasm. It is found in the cytoskeleton. Its subcellular location is the cell projection. The protein localises to the ruffle membrane. It localises to the lamellipodium membrane. The protein resides in the lamellipodium. It is found in the growth cone. Its subcellular location is the axon. Functionally, binds to F-actin and exhibits pH-sensitive F-actin depolymerizing activity. In conjunction with the subcortical maternal complex (SCMC), plays an essential role for zygotes to progress beyond the first embryonic cell divisions via regulation of actin dynamics. Required for the centralization of the mitotic spindle and symmetric division of zygotes. Plays a role in the regulation of cell morphology and cytoskeletal organization in epithelial cells. Required for the up-regulation of atypical chemokine receptor ACKR2 from endosomal compartment to cell membrane, increasing its efficiency in chemokine uptake and degradation. Required for neural tube morphogenesis and neural crest cell migration. The polypeptide is Cofilin-1 (Cfl1) (Mus musculus (Mouse)).